Reading from the N-terminus, the 264-residue chain is Thymidylate synthase (264 aa).

Position 21 (arginine 21) interacts with dUMP. (6R)-5,10-methylene-5,6,7,8-tetrahydrofolate is bound at residue histidine 51. 126 to 127 is a dUMP binding site; it reads RR. Cysteine 146 functions as the Nucleophile in the catalytic mechanism. Residues 166-169, asparagine 177, and 207-209 each bind dUMP; these read RSCD and HLY. Position 169 (aspartate 169) interacts with (6R)-5,10-methylene-5,6,7,8-tetrahydrofolate. Residue alanine 263 participates in (6R)-5,10-methylene-5,6,7,8-tetrahydrofolate binding.

The protein belongs to the thymidylate synthase family. Bacterial-type ThyA subfamily. As to quaternary structure, homodimer.

It localises to the cytoplasm. The catalysed reaction is dUMP + (6R)-5,10-methylene-5,6,7,8-tetrahydrofolate = 7,8-dihydrofolate + dTMP. Its pathway is pyrimidine metabolism; dTTP biosynthesis. Catalyzes the reductive methylation of 2'-deoxyuridine-5'-monophosphate (dUMP) to 2'-deoxythymidine-5'-monophosphate (dTMP) while utilizing 5,10-methylenetetrahydrofolate (mTHF) as the methyl donor and reductant in the reaction, yielding dihydrofolate (DHF) as a by-product. This enzymatic reaction provides an intracellular de novo source of dTMP, an essential precursor for DNA biosynthesis. The sequence is that of Thymidylate synthase from Escherichia fergusonii (strain ATCC 35469 / DSM 13698 / CCUG 18766 / IAM 14443 / JCM 21226 / LMG 7866 / NBRC 102419 / NCTC 12128 / CDC 0568-73).